The primary structure comprises 812 residues: ATP-dependent DNA helicase PIF3 (812 aa).

An ATP-binding site is contributed by 247–254 (GSAGTGKT). The DNA-binding element occupies 741 to 761 (HLVYVACSRVRSMDQLIVRNV).

This sequence belongs to the helicase family. PIF1 subfamily. As to quaternary structure, monomer. It depends on Mg(2+) as a cofactor.

The protein resides in the cytoplasm. It carries out the reaction Couples ATP hydrolysis with the unwinding of duplex DNA at the replication fork by translocating in the 5'-3' direction. This creates two antiparallel DNA single strands (ssDNA). The leading ssDNA polymer is the template for DNA polymerase III holoenzyme which synthesizes a continuous strand.. The enzyme catalyses ATP + H2O = ADP + phosphate + H(+). Functionally, DNA-dependent ATPase and 5'-3' DNA helicase required for the maintenance of genome stability. This is ATP-dependent DNA helicase PIF3 from Trypanosoma brucei brucei (strain 927/4 GUTat10.1).